Here is a 328-residue protein sequence, read N- to C-terminus: Phenylalanine--tRNA ligase alpha subunit (328 aa).

Glutamate 253 is a binding site for Mg(2+).

This sequence belongs to the class-II aminoacyl-tRNA synthetase family. Phe-tRNA synthetase alpha subunit type 1 subfamily. In terms of assembly, tetramer of two alpha and two beta subunits. Requires Mg(2+) as cofactor.

The protein localises to the cytoplasm. The enzyme catalyses tRNA(Phe) + L-phenylalanine + ATP = L-phenylalanyl-tRNA(Phe) + AMP + diphosphate + H(+). In Actinobacillus pleuropneumoniae serotype 5b (strain L20), this protein is Phenylalanine--tRNA ligase alpha subunit.